The chain runs to 875 residues: Peptidyl-glycine alpha-amidating monooxygenase B (875 aa).

The signal sequence occupies residues 1 to 39 (MDMASLISSLLVLFLIFQNSCYCFRSPLSVFKRYEESTR). The segment at 3-394 (MASLISSLLV…KREEEEVLNQ (392 aa)) is peptidylglycine alpha-hydroxylating monooxygenase. The Intragranular segment spans residues 40–763 (SLSNDCLGTT…PSVVQESSAG (724 aa)). 5 disulfides stabilise this stretch: Cys45-Cys184, Cys79-Cys124, Cys112-Cys129, Cys225-Cys332, and Cys291-Cys313. Cu(2+) contacts are provided by His105 and His106. Cu(2+)-binding residues include His170, His240, His242, and Met312. Positions 395–716 (DVHLEEDTDW…SPSKAEHRSV (322 aa)) are peptidyl-alpha-hydroxyglycine alpha-amidating lyase. Position 430 (Arg430) interacts with a protein. The N-linked (GlcNAc...) asparagine glycan is linked to Asn465. NHL repeat units lie at residues 467-508 (SKVL…VGAE), 516-561 (LGRA…FSPN), and 569-613 (GEET…FHAK). 2 disulfides stabilise this stretch: Cys530/Cys551 and Cys598/Cys609. A protein contacts are provided by Tyr550 and Arg602. Residue Asn662 is glycosylated (N-linked (GlcNAc...) asparagine). The stretch at 666 to 709 (GDILDTFIPARKNFEMPHDIAAGDDGTVYVGDAHANAVWKFSPS) is one NHL 4 repeat. The tract at residues 735 to 755 (HMRSRPKTNESVGQQTQEKPS) is disordered. N-linked (GlcNAc...) asparagine glycosylation occurs at Asn743. Residues 743–755 (NESVGQQTQEKPS) show a composition bias toward polar residues. Residues 764 to 787 (VSFVLIITLLIIPVVVLIAIAIFI) form a helical membrane-spanning segment. The Cytoplasmic portion of the chain corresponds to 788-875 (RWRKVRMYGG…APPIPPVSSS (88 aa)). The tract at residues 837–875 (KGFDRLSTEGSDQEKDDDDDGSDSEEEYSAPPIPPVSSS) is disordered. Over residues 850–864 (EKDDDDDGSDSEEEY) the composition is skewed to acidic residues.

It in the C-terminal section; belongs to the peptidyl-alpha-hydroxyglycine alpha-amidating lyase family. The protein in the N-terminal section; belongs to the copper type II ascorbate-dependent monooxygenase family. In terms of assembly, monomer. The cofactor is Zn(2+). Cu(2+) is required as a cofactor.

It is found in the cytoplasmic vesicle. Its subcellular location is the secretory vesicle membrane. It catalyses the reaction a [peptide]-C-terminal glycine + 2 L-ascorbate + O2 = a [peptide]-C-terminal (2S)-2-hydroxyglycine + 2 monodehydro-L-ascorbate radical + H2O. It carries out the reaction a [peptide]-C-terminal (2S)-2-hydroxyglycine = a [peptide]-C-terminal amide + glyoxylate. Its function is as follows. Bifunctional enzyme that catalyzes amidation of the C-terminus of proteins. Alpha-amidation is present at the C-terminus of many endocrine hormones and neuropeptides and is required for their activity. C-terminal amidation also takes place in response to protein fragmentation triggered by oxidative stress, promoting degradation of amidated protein fragments by the proteasome. Alpha-amidation involves two sequential reactions, both of which are catalyzed by separate catalytic domains of the enzyme. The first step, catalyzed by peptidyl alpha-hydroxylating monooxygenase (PHM) domain, is the copper-, ascorbate-, and O2- dependent stereospecific hydroxylation (with S stereochemistry) at the alpha-carbon (C-alpha) of the C-terminal glycine of the peptidylglycine substrate. The second step, catalyzed by the peptidylglycine amidoglycolate lyase (PAL) domain, is the zinc-dependent cleavage of the N-C-alpha bond, producing the alpha-amidated peptide and glyoxylate. This is Peptidyl-glycine alpha-amidating monooxygenase B (pam-b) from Xenopus laevis (African clawed frog).